A 248-amino-acid polypeptide reads, in one-letter code: Exosome complex component Rrp41 (248 aa).

This sequence belongs to the RNase PH family. Rrp41 subfamily. In terms of assembly, component of the archaeal exosome complex. Forms a hexameric ring-like arrangement composed of 3 Rrp41-Rrp42 heterodimers. The hexameric ring associates with a trimer of Rrp4 and/or Csl4 subunits.

The protein resides in the cytoplasm. Its function is as follows. Catalytic component of the exosome, which is a complex involved in RNA degradation. Has 3'-&gt;5' exoribonuclease activity. Can also synthesize heteromeric RNA-tails. This chain is Exosome complex component Rrp41, found in Thermoplasma volcanium (strain ATCC 51530 / DSM 4299 / JCM 9571 / NBRC 15438 / GSS1).